The primary structure comprises 507 residues: ATP synthase subunit alpha (507 aa).

Position 170-177 (170-177) interacts with ATP; the sequence is GDRQTGKT.

It belongs to the ATPase alpha/beta chains family. In terms of assembly, F-type ATPases have 2 components, CF(1) - the catalytic core - and CF(0) - the membrane proton channel. CF(1) has five subunits: alpha(3), beta(3), gamma(1), delta(1), epsilon(1). CF(0) has three main subunits: a(1), b(2) and c(9-12). The alpha and beta chains form an alternating ring which encloses part of the gamma chain. CF(1) is attached to CF(0) by a central stalk formed by the gamma and epsilon chains, while a peripheral stalk is formed by the delta and b chains.

It localises to the cell inner membrane. It catalyses the reaction ATP + H2O + 4 H(+)(in) = ADP + phosphate + 5 H(+)(out). Functionally, produces ATP from ADP in the presence of a proton gradient across the membrane. The alpha chain is a regulatory subunit. In Thermosipho africanus (strain TCF52B), this protein is ATP synthase subunit alpha.